The sequence spans 244 residues: Precorrin-6A reductase (244 aa).

Belongs to the precorrin-6x reductase family.

The enzyme catalyses precorrin-6B + NADP(+) = precorrin-6A + NADPH + 2 H(+). Its pathway is cofactor biosynthesis; adenosylcobalamin biosynthesis; cob(II)yrinate a,c-diamide from precorrin-2 (aerobic route): step 6/10. Its function is as follows. Catalyzes the reduction of the macrocycle of precorrin-6X into precorrin-6Y. This Mycobacterium tuberculosis (strain CDC 1551 / Oshkosh) protein is Precorrin-6A reductase (cobK).